Reading from the N-terminus, the 303-residue chain is Large ribosomal subunit protein uL1m (303 aa).

The protein belongs to the universal ribosomal protein uL1 family. Component of the mitochondrial large ribosomal subunit (mt-LSU). Mature N.crassa 74S mitochondrial ribosomes consist of a small (37S) and a large (54S) subunit. The 37S small subunit contains a 16S ribosomal RNA (16S mt-rRNA) and 32 different proteins. The 54S large subunit contains a 23S rRNA (23S mt-rRNA) and 42 different proteins.

It is found in the mitochondrion. Component of the mitochondrial ribosome (mitoribosome), a dedicated translation machinery responsible for the synthesis of mitochondrial genome-encoded proteins, including at least some of the essential transmembrane subunits of the mitochondrial respiratory chain. The mitoribosomes are attached to the mitochondrial inner membrane and translation products are cotranslationally integrated into the membrane. In Neurospora crassa (strain ATCC 24698 / 74-OR23-1A / CBS 708.71 / DSM 1257 / FGSC 987), this protein is Large ribosomal subunit protein uL1m (mrpl1).